Here is a 137-residue protein sequence, read N- to C-terminus: MVEIVYWSGTGNTEAMANEIEAAVKAAGADVESVRFEDTNVDDVASKDVILLGCPAMGSEELEDSVVEPFFTDLAPKLKGKKVGLFGSYGWGSGEWMDAWKQRTEDTGATVIGTAIVNEMPDNAPECKELGEAAAKA.

The Flavodoxin-like domain occupies 2–137 (VEIVYWSGTG…KELGEAAAKA (136 aa)).

This sequence belongs to the flavodoxin family. It depends on FMN as a cofactor.

In terms of biological role, low-potential electron donor to a number of redox enzymes. The protein is Flavodoxin of Megasphaera elsdenii.